The following is a 78-amino-acid chain: Large ribosomal subunit protein bL28 (78 aa).

The interval 1 to 20 is disordered; it reads MSRVCQVTGKGPVTGNNISH.

The protein belongs to the bacterial ribosomal protein bL28 family.

This Pseudomonas putida (strain ATCC 700007 / DSM 6899 / JCM 31910 / BCRC 17059 / LMG 24140 / F1) protein is Large ribosomal subunit protein bL28.